We begin with the raw amino-acid sequence, 273 residues long: MPELPEVETVRKGLERLVVNQEIASITIKVPKMVKTDLNDFMISLPGKTIQQVLRRGKYLLFDFGEMVMVSHLRMEGKYLLFPNKVPDNKHFHLYFKLTNGSTLVYQDVRKFGTFELVRKSSLKDYFTQKKLGPEPTADTFQFEPFSKGLANSKKPIKPLLLDQRLVAGLGNIYVDEVLWAAKIHPQRLANQLTESETSLLHKEIIRILTLGIEKGGSTIRTYKNALGEDGTMQKYLQVYGKTGQPCPRCGCLIKKIKVGGRGTHYCPRCQCL.

Catalysis depends on P2, which acts as the Schiff-base intermediate with DNA. E3 acts as the Proton donor in catalysis. K58 acts as the Proton donor; for beta-elimination activity in catalysis. The DNA site is built by H91 and R110. The FPG-type zinc-finger motif lies at 238–272 (QVYGKTGQPCPRCGCLIKKIKVGGRGTHYCPRCQC). R262 acts as the Proton donor; for delta-elimination activity in catalysis.

The protein belongs to the FPG family. As to quaternary structure, monomer. It depends on Zn(2+) as a cofactor.

It catalyses the reaction Hydrolysis of DNA containing ring-opened 7-methylguanine residues, releasing 2,6-diamino-4-hydroxy-5-(N-methyl)formamidopyrimidine.. It carries out the reaction 2'-deoxyribonucleotide-(2'-deoxyribose 5'-phosphate)-2'-deoxyribonucleotide-DNA = a 3'-end 2'-deoxyribonucleotide-(2,3-dehydro-2,3-deoxyribose 5'-phosphate)-DNA + a 5'-end 5'-phospho-2'-deoxyribonucleoside-DNA + H(+). Its function is as follows. Involved in base excision repair of DNA damaged by oxidation or by mutagenic agents. Acts as a DNA glycosylase that recognizes and removes damaged bases. Has a preference for oxidized purines, such as 7,8-dihydro-8-oxoguanine (8-oxoG). Has AP (apurinic/apyrimidinic) lyase activity and introduces nicks in the DNA strand. Cleaves the DNA backbone by beta-delta elimination to generate a single-strand break at the site of the removed base with both 3'- and 5'-phosphates. The protein is Formamidopyrimidine-DNA glycosylase of Streptococcus agalactiae serotype Ia (strain ATCC 27591 / A909 / CDC SS700).